Consider the following 397-residue polypeptide: Iron-sulfur cluster assembly SufBD family protein Mb1497 (397 aa).

The protein belongs to the iron-sulfur cluster assembly SufBD family.

This chain is Iron-sulfur cluster assembly SufBD family protein Mb1497, found in Mycobacterium bovis (strain ATCC BAA-935 / AF2122/97).